A 525-amino-acid chain; its full sequence is Cytochrome P450 monooxygenase bsc2 (525 aa).

The helical transmembrane segment at 12–32 (SLFILWLTTLLVSVLATAAYI) threads the bilayer. N-linked (GlcNAc...) asparagine glycosylation is found at asparagine 86 and asparagine 317. Cysteine 456 contributes to the heme binding site.

Belongs to the cytochrome P450 family. Heme serves as cofactor.

The protein resides in the membrane. The protein operates within mycotoxin biosynthesis. Functionally, cytochrome P450 monooxygenase; part of the gene cluster that mediates the biosynthesis of the diterpene glucoside brassicicene C. In the first step of the brassicicene C biosynthesis, the bifunctional diterpene synthase bsc8 that possesses both prenyl transferase and terpene cyclase activity, converts isopentenyl diphosphate and dimethylallyl diphosphate into geranylgeranyl diphosphate (GGDP) that is further converted into fusicocca-2,10(14)-diene, the first precursor for brassicicene C. Fusicocca-2,10(14)-diene is then substrate of cytochrome P450 monooxygenase bsc1 for hydroxylation at the C-8 position. Oxidation at C-16 position to aldehyde is then catalyzed by the cytochrome P450 monooyxygenase bsc7, yielding fusicocca-2,10(14)-diene-8-beta,16-diol. Follows the isomerization of the double bond and reduction of aldehyde to alcohol catalyzed by the short-chain dehydrogenase/reductase bsc3 to yield the diol compound fusicocca-1,10(14)-diene-8 beta,16-diol. The next step is the oxidation at the C-3 position of fusicocca-2,10(14)-diene-8-beta,16-diol catalyzed by the alpha-ketoglutarate dependent dioxygenase bsc9, to produce a triol compound. Methylation of the hydroxy group at position 16 is performed by the methyltransferase bsc6. 16-O-methylation is followed by oxidation at the C-13 position to ketone and an alkyl shift of the methyl group leads to brassicicene C. Although the probable acetyltransferase bsc4 is included in the gene cluster, no acetylation reactions are necessary for brassicicene C biosynthesis. However, the fact that brassicicene E, which is a structurally related compound having an acetoxy group at position 12, was previously isolated from another strain of A.brassicicola suggests that the ATCC 96836 strain might also produce a small amount of brassicicene E. The sequence is that of Cytochrome P450 monooxygenase bsc2 from Alternaria brassicicola (Dark leaf spot agent).